The primary structure comprises 281 residues: E2F-associated phosphoprotein (281 aa).

N-acetylmethionine is present on Met-1. Residues 1–27 (MNRLQDDYDPYAVEEPSDEEPALSSSE) are disordered. Positions 15-27 (EPSDEEPALSSSE) are enriched in acidic residues. Ser-17 carries the phosphoserine modification. Thr-37 carries the phosphothreonine modification. Ser-109 and Ser-111 each carry phosphoserine. The tract at residues 222–245 (PENRRKRRSAKKMRSNPEDPAERE) is disordered. Positions 225–235 (RRKRRSAKKMR) are enriched in basic residues. The segment covering 236-245 (SNPEDPAERE) has biased composition (basic and acidic residues).

In terms of assembly, interacts with E2F1. The C-terminal half binds the N-terminal of E2F1. Also interacts with E2F2 and E2F3, but not E2F4.

The protein resides in the cytoplasm. The protein localises to the nucleus. May play an important role in the fine-tuning of both major E2F1 activities, the regulation of the cell-cycle and the induction of apoptosis. Promotes S-phase entry, and inhibits p14(ARP) expression. In Mus musculus (Mouse), this protein is E2F-associated phosphoprotein (Eapp).